The sequence spans 637 residues: Poly [ADP-ribose] polymerase 2 (637 aa).

A DNA-binding region spans residues 1–140 (MANKLKVDEL…KKEEKIVTAT (140 aa)). An SAP 1 domain is found at 2–36 (ANKLKVDELRLKLAERGLSTTGVKAVLVERLEEAI). The span at 35–46 (AIAEDTKKEESK) shows a compositional bias: basic and acidic residues. The tract at residues 35–56 (AIAEDTKKEESKSKRKRNSSND) is disordered. The Nuclear localization signal signature appears at 41 to 62 (KKEESKSKRKRNSSNDTYESNK). The 35-residue stretch at 69–103 (FRGMIVKELREEAIKRGLDTTGTKKDLLERLCNDA) folds into the SAP 2 domain. Positions 106–117 (VSNAPVKSSNGT) are enriched in polar residues. Positions 106 to 134 (VSNAPVKSSNGTDEAEDDNNGFEEEKKEE) are disordered. A compositionally biased stretch (acidic residues) spans 118–127 (DEAEDDNNGF). The region spanning 158–255 (QYHVLQRGDD…KEFIPHPKSY (98 aa)) is the WGR domain. Residues 286 to 404 (QSKLDTRVAK…EIELATKLLS (119 aa)) form the PARP alpha-helical domain. One can recognise a PARP catalytic domain in the interval 412 to 637 (DPLYYHYQQL…VIQVKFNYKH (226 aa)).

The protein belongs to the ARTD/PARP family.

The protein localises to the nucleus. It carries out the reaction NAD(+) + (ADP-D-ribosyl)n-acceptor = nicotinamide + (ADP-D-ribosyl)n+1-acceptor + H(+).. The catalysed reaction is L-aspartyl-[protein] + NAD(+) = 4-O-(ADP-D-ribosyl)-L-aspartyl-[protein] + nicotinamide. The enzyme catalyses L-glutamyl-[protein] + NAD(+) = 5-O-(ADP-D-ribosyl)-L-glutamyl-[protein] + nicotinamide. In terms of biological role, involved in the base excision repair (BER) pathway, by catalyzing the poly(ADP-ribosyl)ation of a limited number of acceptor proteins involved in chromatin architecture and in DNA metabolism. This modification follows DNA damages and appears as an obligatory step in a detection/signaling pathway leading to the reparation of DNA strand breaks. The sequence is that of Poly [ADP-ribose] polymerase 2 (PARP2) from Arabidopsis thaliana (Mouse-ear cress).